A 265-amino-acid polypeptide reads, in one-letter code: Thiamine thiazole synthase (265 aa).

NAD(+) is bound by residues Ala-43, 62 to 63 (ER), Gly-70, Val-134, and 162 to 164 (HVD). Asp-164 and His-179 together coordinate Fe cation. Residue Met-229 coordinates NAD(+). Arg-239 is a binding site for glycine.

This sequence belongs to the THI4 family. As to quaternary structure, homooctamer; tetramer of dimers. Fe(2+) serves as cofactor.

The enzyme catalyses hydrogen sulfide + glycine + NAD(+) = ADP-5-ethyl-4-methylthiazole-2-carboxylate + nicotinamide + 3 H2O + H(+). It participates in cofactor biosynthesis; thiamine diphosphate biosynthesis. Involved in the biosynthesis of the thiazole moiety of thiamine. Catalyzes the conversion of NAD and glycine to adenosine diphosphate 5-(2-hydroxyethyl)-4-methylthiazole-2-carboxylate (ADT), an adenylated thiazole intermediate, using free sulfide as a source of sulfur. This chain is Thiamine thiazole synthase, found in Sulfolobus acidocaldarius (strain ATCC 33909 / DSM 639 / JCM 8929 / NBRC 15157 / NCIMB 11770).